A 242-amino-acid chain; its full sequence is Ribosomal RNA small subunit methyltransferase G (242 aa).

S-adenosyl-L-methionine contacts are provided by residues glycine 78, leucine 83, 130–131 (AE), and arginine 151.

This sequence belongs to the methyltransferase superfamily. RNA methyltransferase RsmG family.

The protein resides in the cytoplasm. In terms of biological role, specifically methylates the N7 position of guanine in position 518 of 16S rRNA. This Salinispora arenicola (strain CNS-205) protein is Ribosomal RNA small subunit methyltransferase G.